The chain runs to 494 residues: Guanosine-5'-triphosphate,3'-diphosphate pyrophosphatase (494 aa).

It belongs to the GppA/Ppx family. GppA subfamily.

It catalyses the reaction guanosine 3'-diphosphate 5'-triphosphate + H2O = guanosine 3',5'-bis(diphosphate) + phosphate + H(+). It functions in the pathway purine metabolism; ppGpp biosynthesis; ppGpp from GTP: step 2/2. Functionally, catalyzes the conversion of pppGpp to ppGpp. Guanosine pentaphosphate (pppGpp) is a cytoplasmic signaling molecule which together with ppGpp controls the 'stringent response', an adaptive process that allows bacteria to respond to amino acid starvation, resulting in the coordinated regulation of numerous cellular activities. The chain is Guanosine-5'-triphosphate,3'-diphosphate pyrophosphatase from Shigella sonnei (strain Ss046).